A 296-amino-acid polypeptide reads, in one-letter code: MTEHSFKQIDVFSNKGFRGNPVAVFFDADNLSQKEMQQIAKWTNLSETTFVQKPTIDKADYRLRIFTPECELSFAGHPTIGSCFAVVESGYCTPKNCKIIQECLAGLVELTIDGEKDEDTWISFKLPYYKILQTSETAISEVENALGIPLNYSSQVSPPVLIDDGPKWLVIQLPNATDVLNLVPKFQSLSQVCKNNDWIGVTVFGELGKDSFESRSFAPLIHVNEDPACGSGAGAVGVYIGSSQKTPTSLSFTISQGTKLSRQAISKVSVDVSSNKSIAVFVGGQAKTCISGKSFI.

Residue Glu47 is part of the active site.

This sequence belongs to the PhzF family.

May have isomerase activity. Enhances target gene silencing when coexpressed with antisense RNA. This Schizosaccharomyces pombe (strain 972 / ATCC 24843) (Fission yeast) protein is Antisense-enhancing sequence 1 (aes1).